We begin with the raw amino-acid sequence, 444 residues long: Serine--tRNA ligase (444 aa).

249-251 contributes to the L-serine binding site; sequence TAE. Residues 280-282 and V296 each bind ATP; that span reads RRE. E303 is a binding site for L-serine. An ATP-binding site is contributed by 367 to 370; that stretch reads EIVS. T401 is a binding site for L-serine.

Belongs to the class-II aminoacyl-tRNA synthetase family. Type-1 seryl-tRNA synthetase subfamily. Homodimer. The tRNA molecule binds across the dimer.

It is found in the cytoplasm. The catalysed reaction is tRNA(Ser) + L-serine + ATP = L-seryl-tRNA(Ser) + AMP + diphosphate + H(+). It catalyses the reaction tRNA(Sec) + L-serine + ATP = L-seryl-tRNA(Sec) + AMP + diphosphate + H(+). Its pathway is aminoacyl-tRNA biosynthesis; selenocysteinyl-tRNA(Sec) biosynthesis; L-seryl-tRNA(Sec) from L-serine and tRNA(Sec): step 1/1. In terms of biological role, catalyzes the attachment of serine to tRNA(Ser). Is also able to aminoacylate tRNA(Sec) with serine, to form the misacylated tRNA L-seryl-tRNA(Sec), which will be further converted into selenocysteinyl-tRNA(Sec). This Picrophilus torridus (strain ATCC 700027 / DSM 9790 / JCM 10055 / NBRC 100828 / KAW 2/3) protein is Serine--tRNA ligase.